The following is a 459-amino-acid chain: Mycothione reductase (459 aa).

Residue 31–39 (EQGTFGGTC) coordinates FAD. The cysteines at positions 39 and 44 are disulfide-linked. H444 serves as the catalytic Proton acceptor.

This sequence belongs to the class-I pyridine nucleotide-disulfide oxidoreductase family. In terms of assembly, homodimer. It depends on FAD as a cofactor.

It catalyses the reaction 2 mycothiol + NADP(+) = mycothione + NADPH + H(+). The enzyme catalyses 2 mycothiol + NAD(+) = mycothione + NADH + H(+). Its function is as follows. Catalyzes the NAD(P)H-dependent reduction of mycothione (the oxidized disulfide form of mycothiol) to mycothiol. In Mycobacterium tuberculosis (strain CDC 1551 / Oshkosh), this protein is Mycothione reductase (mtr).